We begin with the raw amino-acid sequence, 164 residues long: SsrA-binding protein (164 aa).

Belongs to the SmpB family.

The protein localises to the cytoplasm. Required for rescue of stalled ribosomes mediated by trans-translation. Binds to transfer-messenger RNA (tmRNA), required for stable association of tmRNA with ribosomes. tmRNA and SmpB together mimic tRNA shape, replacing the anticodon stem-loop with SmpB. tmRNA is encoded by the ssrA gene; the 2 termini fold to resemble tRNA(Ala) and it encodes a 'tag peptide', a short internal open reading frame. During trans-translation Ala-aminoacylated tmRNA acts like a tRNA, entering the A-site of stalled ribosomes, displacing the stalled mRNA. The ribosome then switches to translate the ORF on the tmRNA; the nascent peptide is terminated with the 'tag peptide' encoded by the tmRNA and targeted for degradation. The ribosome is freed to recommence translation, which seems to be the essential function of trans-translation. The sequence is that of SsrA-binding protein from Shewanella woodyi (strain ATCC 51908 / MS32).